An 81-amino-acid polypeptide reads, in one-letter code: Photosystem I iron-sulfur center (81 aa).

4Fe-4S ferredoxin-type domains lie at 2–31 (AHIV…MVPW) and 39–68 (MASA…VRVY). Residues C11, C14, C17, C21, C48, C51, C54, and C58 each contribute to the [4Fe-4S] cluster site.

In terms of assembly, the eukaryotic PSI reaction center is composed of at least 11 subunits. The cofactor is [4Fe-4S] cluster.

It localises to the plastid. Its subcellular location is the chloroplast thylakoid membrane. The enzyme catalyses reduced [plastocyanin] + hnu + oxidized [2Fe-2S]-[ferredoxin] = oxidized [plastocyanin] + reduced [2Fe-2S]-[ferredoxin]. Apoprotein for the two 4Fe-4S centers FA and FB of photosystem I (PSI); essential for photochemical activity. FB is the terminal electron acceptor of PSI, donating electrons to ferredoxin. The C-terminus interacts with PsaA/B/D and helps assemble the protein into the PSI complex. Required for binding of PsaD and PsaE to PSI. PSI is a plastocyanin/cytochrome c6-ferredoxin oxidoreductase, converting photonic excitation into a charge separation, which transfers an electron from the donor P700 chlorophyll pair to the spectroscopically characterized acceptors A0, A1, FX, FA and FB in turn. The protein is Photosystem I iron-sulfur center of Chlamydomonas reinhardtii (Chlamydomonas smithii).